We begin with the raw amino-acid sequence, 549 residues long: Vacuolar fusion protein MON1 homolog A (549 aa).

Disordered stretches follow at residues 1–90 and 109–137; these read MAAD…EQIS and EEMR…GKEE. Basic and acidic residues predominate over residues 110–119; the sequence is EMRQSQEGKL.

It belongs to the MON1/SAND family.

In terms of biological role, plays an important role in membrane trafficking through the secretory apparatus. Not involved in endocytic trafficking to lysosomes. The sequence is that of Vacuolar fusion protein MON1 homolog A (MON1A) from Gallus gallus (Chicken).